The sequence spans 358 residues: MSEATVWSDLPGELLDHIANGLFSKVELLRFRSICKTFRSAVDSDKNFLDHLKRNRRRLLSPYSTGKTCSLSPAAFYRVVLSSYPDKGWLIKLQDAYVSSQKQLLSPLSRFSIKSSGKTLDLLEFTVSEIHQSYDVEYLYYNSTRASFNFARVVLAEDFVFIVDNYKKIWLCNSNESDSHWVRIMDEEVKLFSDIVFHKGYMYALDLTGAVWWISLSEFGIFQFGPSSTPMDYCDIDECKDKRFVEYCGDLCIVHRFSRKFRIKRVDIDMTVGFKVYKMDEELVEYVEVKSLGDKAFVMATDSCFSVLAREYYGCLENSIYFTEQNNVKVFKLGDGSITNMVDSSFQSCFQMLIPPLV.

In terms of domain architecture, F-box spans A4–H51.

As to quaternary structure, part of a SCF (ASK-cullin-F-box) protein ligase complex.

The protein operates within protein modification; protein ubiquitination. In terms of biological role, component of SCF(ASK-cullin-F-box) E3 ubiquitin ligase complexes, which may mediate the ubiquitination and subsequent proteasomal degradation of target proteins. The protein is F-box protein At4g35733 of Arabidopsis thaliana (Mouse-ear cress).